The primary structure comprises 169 residues: UPF0398 protein Spy49_1277c (169 aa).

The protein belongs to the UPF0398 family.

The protein is UPF0398 protein Spy49_1277c of Streptococcus pyogenes serotype M49 (strain NZ131).